The sequence spans 160 residues: Phosphopantetheine adenylyltransferase (160 aa).

Substrate is bound at residue serine 8. Residues 8-9 (SF) and histidine 16 contribute to the ATP site. Lysine 40, leucine 73, and lysine 87 together coordinate substrate. ATP contacts are provided by residues 88 to 90 (GLR), glutamate 98, and 122 to 128 (YGYVSST).

The protein belongs to the bacterial CoaD family. Homohexamer. It depends on Mg(2+) as a cofactor.

It localises to the cytoplasm. It catalyses the reaction (R)-4'-phosphopantetheine + ATP + H(+) = 3'-dephospho-CoA + diphosphate. Its pathway is cofactor biosynthesis; coenzyme A biosynthesis; CoA from (R)-pantothenate: step 4/5. Reversibly transfers an adenylyl group from ATP to 4'-phosphopantetheine, yielding dephospho-CoA (dPCoA) and pyrophosphate. In Corynebacterium glutamicum (strain R), this protein is Phosphopantetheine adenylyltransferase.